The chain runs to 77 residues: Omega-conotoxin-like 6 (77 aa).

The N-terminal stretch at 1–22 (MKLTCVVIIAVLLLTACQLITA) is a signal peptide. The propeptide occupies 23–50 (DDSRGVQKHRSLRSTTKVSKSTSCMEAG). Intrachain disulfides connect Cys-46/Cys-61, Cys-53/Cys-64, and Cys-60/Cys-71.

This sequence belongs to the conotoxin O1 superfamily. As to expression, expressed by the venom duct.

The protein localises to the secreted. Omega-conotoxins act at presynaptic membranes, they bind and block voltage-gated calcium channels (Cav). The protein is Omega-conotoxin-like 6 of Conus striatus (Striated cone).